Consider the following 396-residue polypeptide: Orotidine 5'-phosphate decarboxylase (396 aa).

Substrate contacts are provided by residues aspartate 46, 68–70 (KTH), 103–112 (DRKFVDIGST), tyrosine 346, and arginine 365. The active-site Proton donor is the lysine 105.

This sequence belongs to the OMP decarboxylase family.

The enzyme catalyses orotidine 5'-phosphate + H(+) = UMP + CO2. Its pathway is pyrimidine metabolism; UMP biosynthesis via de novo pathway; UMP from orotate: step 2/2. This Sordaria macrospora (strain ATCC MYA-333 / DSM 997 / K(L3346) / K-hell) protein is Orotidine 5'-phosphate decarboxylase (URA3).